The primary structure comprises 559 residues: NAD-dependent histone deacetylase SIR2 (559 aa).

Residues 1-73 form a disordered region; sequence MSESASMLQG…NDHSAQEVAG (73 aa). Residues 39-51 are compositionally biased toward basic and acidic residues; it reads NDEKELLEATKAD. Acidic residues predominate over residues 52-62; the sequence is ELDEVVDDYAE. The Deacetylase sirtuin-type domain maps to 223 to 514; sequence RLANFFTLDH…AFIAQKCGWD (292 aa). NAD(+) is bound by residues 248–267 and 330–333; these read GAGI…KGFY and QNID. His350 serves as the catalytic Proton acceptor. Positions 358, 361, 382, and 385 each coordinate Zn(2+). Residues 458–460, 483–485, and Cys500 each bind NAD(+); these read GTS and NRD.

This sequence belongs to the sirtuin family. Class I subfamily. Requires Zn(2+) as cofactor.

It localises to the nucleus. It catalyses the reaction N(6)-acetyl-L-lysyl-[protein] + NAD(+) + H2O = 2''-O-acetyl-ADP-D-ribose + nicotinamide + L-lysyl-[protein]. NAD-dependent deacetylase. Heterochromatin component that silences transcription at silent mating loci, telomeres and the ribosomal DNA, and that also suppresses recombination in the rDNA and extends replicative life span. It acts as a NAD-dependent histone deacetylase, which deacetylates 'Lys-9' and 'Lys-14' of Histone H3 and 'Lys-16' of Histone H4. This is NAD-dependent histone deacetylase SIR2 (SIR2) from Eremothecium gossypii (strain ATCC 10895 / CBS 109.51 / FGSC 9923 / NRRL Y-1056) (Yeast).